Reading from the N-terminus, the 85-residue chain is Large ribosomal subunit protein bL27 (85 aa).

The segment at 1 to 22 is disordered; that stretch reads MAHKKAGGSTNNGRDSESKRLG.

The protein belongs to the bacterial ribosomal protein bL27 family.

This Photobacterium profundum (strain SS9) protein is Large ribosomal subunit protein bL27.